A 415-amino-acid chain; its full sequence is Lipoyl synthase, mitochondrial (415 aa).

The N-terminal 32 residues, 1–32 (MAVSTSHFRSLCASSRSLSRTGIVAPISCRGY), are a transit peptide targeting the mitochondrion. Residues 30–50 (RGYATTEPSPSATSTTTTTTA) are disordered. The segment covering 33 to 49 (ATTEPSPSATSTTTTTT) has biased composition (low complexity). [4Fe-4S] cluster contacts are provided by cysteine 132, cysteine 137, cysteine 143, cysteine 163, cysteine 167, cysteine 170, and serine 378. A Radical SAM core domain is found at 146–367 (GSDKSAATAT…RQRALDMGFL (222 aa)).

Belongs to the radical SAM superfamily. Lipoyl synthase family. Requires [4Fe-4S] cluster as cofactor.

The protein localises to the mitochondrion. It carries out the reaction [[Fe-S] cluster scaffold protein carrying a second [4Fe-4S](2+) cluster] + N(6)-octanoyl-L-lysyl-[protein] + 2 oxidized [2Fe-2S]-[ferredoxin] + 2 S-adenosyl-L-methionine + 4 H(+) = [[Fe-S] cluster scaffold protein] + N(6)-[(R)-dihydrolipoyl]-L-lysyl-[protein] + 4 Fe(3+) + 2 hydrogen sulfide + 2 5'-deoxyadenosine + 2 L-methionine + 2 reduced [2Fe-2S]-[ferredoxin]. It functions in the pathway protein modification; protein lipoylation via endogenous pathway; protein N(6)-(lipoyl)lysine from octanoyl-[acyl-carrier-protein]: step 2/2. In terms of biological role, catalyzes the radical-mediated insertion of two sulfur atoms into the C-6 and C-8 positions of the octanoyl moiety bound to the lipoyl domains of lipoate-dependent enzymes, thereby converting the octanoylated domains into lipoylated derivatives. In Neosartorya fischeri (strain ATCC 1020 / DSM 3700 / CBS 544.65 / FGSC A1164 / JCM 1740 / NRRL 181 / WB 181) (Aspergillus fischerianus), this protein is Lipoyl synthase, mitochondrial.